A 362-amino-acid polypeptide reads, in one-letter code: Aminomethyltransferase (362 aa).

The protein belongs to the GcvT family. In terms of assembly, the glycine cleavage system is composed of four proteins: P, T, L and H.

It carries out the reaction N(6)-[(R)-S(8)-aminomethyldihydrolipoyl]-L-lysyl-[protein] + (6S)-5,6,7,8-tetrahydrofolate = N(6)-[(R)-dihydrolipoyl]-L-lysyl-[protein] + (6R)-5,10-methylene-5,6,7,8-tetrahydrofolate + NH4(+). The glycine cleavage system catalyzes the degradation of glycine. In Bacillus subtilis (strain 168), this protein is Aminomethyltransferase.